The chain runs to 440 residues: tRNA(Ile)-lysidine synthase (440 aa).

Residue 31-36 (SGGADS) coordinates ATP.

It belongs to the tRNA(Ile)-lysidine synthase family.

The protein resides in the cytoplasm. The enzyme catalyses cytidine(34) in tRNA(Ile2) + L-lysine + ATP = lysidine(34) in tRNA(Ile2) + AMP + diphosphate + H(+). Its function is as follows. Ligates lysine onto the cytidine present at position 34 of the AUA codon-specific tRNA(Ile) that contains the anticodon CAU, in an ATP-dependent manner. Cytidine is converted to lysidine, thus changing the amino acid specificity of the tRNA from methionine to isoleucine. This chain is tRNA(Ile)-lysidine synthase, found in Borrelia garinii subsp. bavariensis (strain ATCC BAA-2496 / DSM 23469 / PBi) (Borreliella bavariensis).